Here is a 386-residue protein sequence, read N- to C-terminus: N-terminal EF-hand calcium-binding protein 2 (386 aa).

Arginine 10 carries the omega-N-methylarginine modification. At arginine 42 the chain carries Asymmetric dimethylarginine. EF-hand domains lie at 60-95 (GGTA…GVLN) and 96-129 (EKEL…HMGD). The Ca(2+) site is built by aspartate 73, asparagine 75, aspartate 77, lysine 79, glutamate 84, aspartate 107, aspartate 109, threonine 111, histidine 113, and glutamate 118. Positions 170-201 (LKETANQIQSLLSSVESAVEAIEEQTSQLRQN) form a coiled coil. The region spanning 286–375 (QLVRQEMAVC…SQPEALSRIL (90 aa)) is the ABM domain.

In terms of assembly, interacts (calcium-dependent) with ADORA2A and GRM5. In terms of tissue distribution, expressed in brain. Expressed in the spinal dorsal horn with especially strong expression in lamina IIi; found in excitory synaptic boutons and in ependymal cells (at protein level).

It is found in the cytoplasm. It localises to the cell projection. The protein resides in the dendrite. Its subcellular location is the axon. The protein localises to the cell membrane. May act as a signaling scaffold protein that senses intracellular calcium. Can modulate ligand-induced internalization of ADORA2A and coupling efficiency of mGluR5/GRM5; for both receptors may regulate signaling activity such as promoting MAPK1/3 (ERK1/2) activation. The chain is N-terminal EF-hand calcium-binding protein 2 (NECAB2) from Homo sapiens (Human).